A 715-amino-acid chain; its full sequence is ATP-dependent DNA helicase Hel308 (715 aa).

Positions 8 to 36 (MPIEDLKLPSNVIEIIKKRGIKKLNPPQT) match the Q motif motif. ATP is bound by residues Gln35 and 53–60 (SPTGSGKT). A Helicase ATP-binding domain is found at 40–203 (KKGLLEGNRL…WLGAEPVATN (164 aa)). The DEAH box motif lies at 152 to 155 (DELH). The 207-residue stretch at 236–442 (HGDDAIIAYT…ERAFYTFLLG (207 aa)) folds into the Helicase C-terminal domain.

Belongs to the helicase family. Hel308 subfamily. Monomer.

It catalyses the reaction Couples ATP hydrolysis with the unwinding of duplex DNA by translocating in the 3'-5' direction.. The catalysed reaction is ATP + H2O = ADP + phosphate + H(+). Its function is as follows. DNA-dependent ATPase and 3'-5' DNA helicase that may be involved in repair of stalled replication forks. A low processivity 3'-5' helicase. Unwinds short dsDNA substrates with 3'-overhangs (25 bp dsDNA with 25 base overhang), less active on longer dsDNA substrates. Also unwinds the lagging strand of a stalled replication fork (but the leading strand was not tested). Binds ssDNA, but dsDNA about 35-fold less well. Able to displace streptavidin from biotinylated ssDNA, which is partially inhibited by DNA-binding proteins, suggesting it may play a role in stripping proteins from stalled replication forks. The chain is ATP-dependent DNA helicase Hel308 from Saccharolobus solfataricus (strain 98/2) (Sulfolobus solfataricus).